The primary structure comprises 262 residues: Zinc import ATP-binding protein ZnuC (262 aa).

The 216-residue stretch at 5-220 (VSLEQLCVEF…PSYIALFGNA (216 aa)) folds into the ABC transporter domain. 37-44 (GPNGAGKS) lines the ATP pocket. Residues 236 to 262 (HHDLSGSPVSGDATSCSNHNHGHHHHD) form a disordered region.

It belongs to the ABC transporter superfamily. Zinc importer (TC 3.A.1.15.5) family. The complex is composed of two ATP-binding proteins (ZnuC), two transmembrane proteins (ZnuB) and a solute-binding protein (ZnuA).

It localises to the cell inner membrane. The enzyme catalyses Zn(2+)(out) + ATP(in) + H2O(in) = Zn(2+)(in) + ADP(in) + phosphate(in) + H(+)(in). Part of the ABC transporter complex ZnuABC involved in zinc import. Responsible for energy coupling to the transport system. The polypeptide is Zinc import ATP-binding protein ZnuC (Vibrio parahaemolyticus serotype O3:K6 (strain RIMD 2210633)).